Reading from the N-terminus, the 341-residue chain is Beta-hexosaminidase (341 aa).

Substrate-binding positions include Asp61, Arg69, Arg134, and 164–165; that span reads KH. His177 (proton donor/acceptor) is an active-site residue. Asp249 (nucleophile) is an active-site residue.

It belongs to the glycosyl hydrolase 3 family. NagZ subfamily.

Its subcellular location is the cytoplasm. The catalysed reaction is Hydrolysis of terminal non-reducing N-acetyl-D-hexosamine residues in N-acetyl-beta-D-hexosaminides.. It participates in cell wall biogenesis; peptidoglycan recycling. Its function is as follows. Plays a role in peptidoglycan recycling by cleaving the terminal beta-1,4-linked N-acetylglucosamine (GlcNAc) from peptide-linked peptidoglycan fragments, giving rise to free GlcNAc, anhydro-N-acetylmuramic acid and anhydro-N-acetylmuramic acid-linked peptides. This chain is Beta-hexosaminidase, found in Shewanella frigidimarina (strain NCIMB 400).